Consider the following 615-residue polypeptide: MPDYRSKTSTHGRNMAGARALWRATGMKDEDFKKPIIAIANSFTQFVPGHVHLKDMGQLVAREVERAGGVAKEFNTIAVDDGIAMGHDGMLYSLPSREIIADSVEYMVNAHCADAIVCISNCDKITPGMLMASLRLNIPVIFVSGGPMEAGKTKLASHGLDLVDAMVIAADSTASDEKVAEYERSACPTCGSCSGMFTANSMNCLTEALGLALPGNGSALATHSDREQLFLQAGRTIVDLCRQYYKENDDSVLPRNIANFKAFENAMTLDIAMGGSTNTILHLLAAAQEAEIDFDLRHIDHLSRKVPQLCKVAPNIQKYHMEDVHRAGGIFSILGELARGGLLHTDLPTVHSKTLAEGIAKWDITQTDDEAVHTFFKAGPAGIPTQTAFSQSTRWESLDDDRENGCIRSVQHAYSQEGGLAVLYGNIALDGCVVKTAGVDESIHVFEGSAKIFESQDSAVRGILADEVKAGDIVIIRYEGPKGGPGMQEMLYPTSYLKSKGLGKDCALLTDGRFSGGTSGLSIGHASPEAAAGGAIGLVRDGDKVLIDIPNRSINLLIDDAEMAERRTEQDKKGWKPVESRPRKVTTALKAYALLATSADKGAVRDKALLDKLVP.

Residue Asp81 coordinates Mg(2+). Residue Cys122 coordinates [2Fe-2S] cluster. Mg(2+) contacts are provided by Asp123 and Lys124. Position 124 is an N6-carboxylysine (Lys124). Position 193 (Cys193) interacts with [2Fe-2S] cluster. Glu489 provides a ligand contact to Mg(2+). Ser515 (proton acceptor) is an active-site residue.

It belongs to the IlvD/Edd family. Homodimer. [2Fe-2S] cluster is required as a cofactor. Mg(2+) serves as cofactor.

The enzyme catalyses (2R)-2,3-dihydroxy-3-methylbutanoate = 3-methyl-2-oxobutanoate + H2O. It catalyses the reaction (2R,3R)-2,3-dihydroxy-3-methylpentanoate = (S)-3-methyl-2-oxopentanoate + H2O. The protein operates within amino-acid biosynthesis; L-isoleucine biosynthesis; L-isoleucine from 2-oxobutanoate: step 3/4. It participates in amino-acid biosynthesis; L-valine biosynthesis; L-valine from pyruvate: step 3/4. Functions in the biosynthesis of branched-chain amino acids. Catalyzes the dehydration of (2R,3R)-2,3-dihydroxy-3-methylpentanoate (2,3-dihydroxy-3-methylvalerate) into 2-oxo-3-methylpentanoate (2-oxo-3-methylvalerate) and of (2R)-2,3-dihydroxy-3-methylbutanoate (2,3-dihydroxyisovalerate) into 2-oxo-3-methylbutanoate (2-oxoisovalerate), the penultimate precursor to L-isoleucine and L-valine, respectively. The polypeptide is Dihydroxy-acid dehydratase (Pseudomonas syringae pv. syringae (strain B728a)).